Consider the following 585-residue polypeptide: Switch-associated protein 70 (585 aa).

The region spanning 210-306 is the PH domain; it reads DVLKQGYMIK…WIQAIHSTIH (97 aa). Residues 316-532 are a coiled coil; sequence HKEARQRRKE…KLEMAAKMTK (217 aa).

As to quaternary structure, the SWAP complex consists of NPM1, NCL, PARP1 and SWAP70. In terms of processing, tyrosine-phosphorylated.

Its subcellular location is the cytoplasm. The protein resides in the cell membrane. It localises to the nucleus. It is found in the cell projection. The protein localises to the lamellipodium. Functionally, phosphatidylinositol 3,4,5-trisphosphate-dependent guanine nucleotide exchange factor (GEF) which, independently of RAS, transduces signals from tyrosine kinase receptors to RAC. It also mediates signaling of membrane ruffling. Regulates the actin cytoskeleton as an effector or adapter protein in response to agonist stimulated phosphatidylinositol (3,4)-bisphosphate production and cell protrusion. The sequence is that of Switch-associated protein 70 (SWAP70) from Bos taurus (Bovine).